The primary structure comprises 86 residues: Sec-independent protein translocase protein TatA (86 aa).

The chain crosses the membrane as a helical span at residues 1 to 21 (MGISIWQLLIILAIVLVLFGA).

It belongs to the TatA/E family. In terms of assembly, the Tat system comprises two distinct complexes: a TatABC complex, containing multiple copies of TatA, TatB and TatC subunits, and a separate TatA complex, containing only TatA subunits. Substrates initially bind to the TatABC complex, which probably triggers association of the separate TatA complex to form the active translocon.

The protein resides in the cell inner membrane. Its function is as follows. Part of the twin-arginine translocation (Tat) system that transports large folded proteins containing a characteristic twin-arginine motif in their signal peptide across membranes. TatA could form the protein-conducting channel of the Tat system. This is Sec-independent protein translocase protein TatA from Hydrogenovibrio crunogenus (strain DSM 25203 / XCL-2) (Thiomicrospira crunogena).